Here is a 321-residue protein sequence, read N- to C-terminus: Transmembrane and ubiquitin-like domain-containing protein 2 (321 aa).

Residues 36–56 traverse the membrane as a helical segment; that stretch reads VMVVAGVVVLILALVLAWLST. 2 disordered regions span residues 87-131 and 145-170; these read LVAG…GGVE and KRQAGAGSSSPEAPLRSEDSTCLPPS. Basic and acidic residues predominate over residues 104–120; the sequence is EGNDEKAEEAGEGRGDS. A Ubiquitin-like domain is found at 174 to 247; the sequence is ITVRLKFLND…IHCHRSPPGS (74 aa). The next 2 helical transmembrane spans lie at 266-286 and 295-315; these read LGVNVGSLMVPVFVVLLGVVW and FFTAPATVSLVGVTVFFSFLV.

The protein localises to the membrane. The protein is Transmembrane and ubiquitin-like domain-containing protein 2 (TMUB2) of Homo sapiens (Human).